Reading from the N-terminus, the 66-residue chain is Nigrocin-2GRa (66 aa).

Positions 1-22 (MFTLKKSQLLLFFPGTINLSLC) are cleaved as a signal peptide. Residues 23–45 (QDETNAEEERRDEEVAKMEEIKR) constitute a propeptide that is removed on maturation. A disulfide bridge connects residues C60 and C66.

Expressed by the skin glands.

It is found in the secreted. Antimicrobial peptide active at least against the Gram-positive bacterium S.aureus but with otherwise unclear activity spectrum. Lacks hemolytic activity against rabbit or human erythrocytes. This is Nigrocin-2GRa from Odorrana grahami (Yunnanfu frog).